A 396-amino-acid chain; its full sequence is Elongation factor Tu (396 aa).

Residues 10-205 (KSHANIGTIG…AVDEYIPTPE (196 aa)) form the tr-type G domain. The G1 stretch occupies residues 19–26 (GHVDHGKT). 19-26 (GHVDHGKT) lines the GTP pocket. Mg(2+) is bound at residue Thr26. Residues 61-65 (GITIS) form a G2 region. Residues 82–85 (DCPG) form a G3 region. GTP is bound by residues 82–86 (DCPGH) and 137–140 (NKCD). The G4 stretch occupies residues 137–140 (NKCD). Residues 175 to 177 (SAL) form a G5 region.

Belongs to the TRAFAC class translation factor GTPase superfamily. Classic translation factor GTPase family. EF-Tu/EF-1A subfamily. As to quaternary structure, monomer.

It is found in the cytoplasm. It catalyses the reaction GTP + H2O = GDP + phosphate + H(+). In terms of biological role, GTP hydrolase that promotes the GTP-dependent binding of aminoacyl-tRNA to the A-site of ribosomes during protein biosynthesis. This chain is Elongation factor Tu, found in Bacillus velezensis (strain DSM 23117 / BGSC 10A6 / LMG 26770 / FZB42) (Bacillus amyloliquefaciens subsp. plantarum).